A 794-amino-acid polypeptide reads, in one-letter code: DNA ligase (794 aa).

NAD(+)-binding positions include 35-39 (DAEYD), 84-85 (SL), and Glu126. The active-site N6-AMP-lysine intermediate is Lys128. Residues Arg149, Glu186, Lys302, and Lys326 each coordinate NAD(+). Zn(2+) is bound by residues Cys420, Cys423, Cys450, and Cys456. One can recognise a BRCT domain in the interval 711–794 (VEGLPLAGQT…KLLDEYGVAH (84 aa)).

This sequence belongs to the NAD-dependent DNA ligase family. LigA subfamily. It depends on Mg(2+) as a cofactor. Mn(2+) is required as a cofactor.

The enzyme catalyses NAD(+) + (deoxyribonucleotide)n-3'-hydroxyl + 5'-phospho-(deoxyribonucleotide)m = (deoxyribonucleotide)n+m + AMP + beta-nicotinamide D-nucleotide.. Functionally, DNA ligase that catalyzes the formation of phosphodiester linkages between 5'-phosphoryl and 3'-hydroxyl groups in double-stranded DNA using NAD as a coenzyme and as the energy source for the reaction. It is essential for DNA replication and repair of damaged DNA. The sequence is that of DNA ligase from Pseudomonas paraeruginosa (strain DSM 24068 / PA7) (Pseudomonas aeruginosa (strain PA7)).